The sequence spans 151 residues: Large ribosomal subunit protein uL22 (151 aa).

It belongs to the universal ribosomal protein uL22 family. As to quaternary structure, part of the 50S ribosomal subunit.

Functionally, this protein binds specifically to 23S rRNA. It makes multiple contacts with different domains of the 23S rRNA in the assembled 50S subunit and ribosome. In terms of biological role, the globular domain of the protein is located near the polypeptide exit tunnel on the outside of the subunit, while an extended beta-hairpin is found that lines the wall of the exit tunnel in the center of the 70S ribosome. The sequence is that of Large ribosomal subunit protein uL22 from Methanococcoides burtonii (strain DSM 6242 / NBRC 107633 / OCM 468 / ACE-M).